The following is a 417-amino-acid chain: MSAEQDKEPIALKRVRGGDSGLDGLGGPNIQLGSPDKKKRKANTQGSSFPPLSEYAPPPNPNSDHLVAANPFDDSYNTISYKPLPSSNPYLGPGYPGFGGYSTFRMPPHVPPRMSSPYCGPYSLRNQPHPFPQNPLGMGFNRPHAFNFGPHDNSNFGNPPYNNVLTQDINMPGQHFRQGSAENFSQIPPQNVGQVSNPDLASNFAPGNNSNFTSPLETNHSFIPPPNAFGQAKAPLPKQDFTQGATKTPNQNSSTHPPHLNMEDPVNQSNVELKNVNRNNVVQENSRSGSAEATNNHANGTQNKPRQPRGAADLCTPDKSRKFSLLPSRHGHSSSDPVYPCGICTNEVNDDQDAILCEASCQKWFHRICTGMTETAYGLLTAEASAVWGCDTCMADKDVQLMRTREAFGPPAVGGDA.

The span at 1–11 (MSAEQDKEPIA) shows a compositional bias: basic and acidic residues. Disordered regions lie at residues 1–71 (MSAE…AANP), 175–265 (HFRQ…MEDP), and 284–318 (ENSRSGSAEATNNHANGTQNKPRQPRGAADLCTPD). A compositionally biased stretch (gly residues) spans 18 to 27 (GDSGLDGLGG). Residues 35–41 (PDKKKRK) carry the Nuclear localization signal motif. 3 stretches are compositionally biased toward polar residues: residues 180–221 (SAEN…TNHS), 240–256 (DFTQGATKTPNQNSSTH), and 284–305 (ENSRSGSAEATNNHANGTQNKP). The PHD-type zinc-finger motif lies at 338-396 (VYPCGICTNEVNDDQDAILCEASCQKWFHRICTGMTETAYGLLTAEASAVWGCDTCMAD). The tract at residues 339–386 (YPCGICTNEVNDDQDAILCEASCQKWFHRICTGMTETAYGLLTAEASA) is interaction with H3K4me2. Positions 371–389 (GMTETAYGLLTAEASAVWG) are interaction with BCL9.

In terms of assembly, interacts with BCL9 via The PHD-type zinc finger motiv, and thereby becomes part of the nuclear beta-catenin/TCF complex. Found in a complex with BCL9L, CDC73, CTNNB1 and PYGO1. Interacts with histone H3 mono-, di- or tri-methylated at 'Lys4' (H3K4me1, H3K4me2, H3K4me3); the interaction is enhanced by the interaction with BCL9.

Its subcellular location is the nucleus. Its function is as follows. Involved in signal transduction through the Wnt pathway. The chain is Pygopus homolog 1 (Pygo1) from Mus musculus (Mouse).